Reading from the N-terminus, the 519-residue chain is Maturase K (519 aa).

Belongs to the intron maturase 2 family. MatK subfamily.

It is found in the plastid. The protein resides in the chloroplast. Its function is as follows. Usually encoded in the trnK tRNA gene intron. Probably assists in splicing its own and other chloroplast group II introns. The protein is Maturase K of Dioscorea elephantipes (Elephant's foot yam).